The sequence spans 258 residues: Acetylglutamate kinase (258 aa).

Residues 41 to 42, Arg63, and Asn156 each bind substrate; that span reads GG.

It belongs to the acetylglutamate kinase family. ArgB subfamily.

It localises to the cytoplasm. The catalysed reaction is N-acetyl-L-glutamate + ATP = N-acetyl-L-glutamyl 5-phosphate + ADP. It participates in amino-acid biosynthesis; L-arginine biosynthesis; N(2)-acetyl-L-ornithine from L-glutamate: step 2/4. Functionally, catalyzes the ATP-dependent phosphorylation of N-acetyl-L-glutamate. The polypeptide is Acetylglutamate kinase (Geobacillus kaustophilus (strain HTA426)).